The sequence spans 372 residues: Proton-coupled zinc antiporter SLC30A2 (372 aa).

Topologically, residues 1-140 (MEAKEKQHLL…TMNFGWQRAE (140 aa)) are cytoplasmic. Residues 51-54 (HHCH) carry the Mitochondrial localization signal motif. Zn(2+)-binding residues include Cys53, His106, and Asp110. Residues 141–161 (ILGALVSVLSIWVVTGVLVYL) traverse the membrane as a helical segment. Topologically, residues 162-175 (AVERLISGDYEIDG) are lumenal. A helical transmembrane segment spans residues 176-196 (GTMLITSGCAVAVNIIMGLTL). The Cytoplasmic segment spans residues 197–220 (HQSGHGHSHGTTNQQEENPSVRAA). A helical membrane pass occupies residues 221 to 241 (FIHVIGDFMQSMGVLVAAYIL). Zn(2+) contacts are provided by His223 and Asp227. Residues 242-249 (YFKPEYKY) lie on the Lumenal side of the membrane. The helical transmembrane segment at 250–270 (VDPICTFVFSILVLGTTLTIL) threads the bilayer. Residues 271–304 (RDVILVLMEGTPKGVDFTAVRDLLLSVEGVEALH) lie on the Cytoplasmic side of the membrane. The short motif at 294 to 295 (LL) is the Lysosomal targeting motif element. Phosphoserine is present on Ser296. The Zn(2+) site is built by His304, His321, and Glu355. A helical membrane pass occupies residues 305–325 (SLHIWALTVAQPVLSVHIAIA). Residues 326–372 (QNTDAQAVLKTASSRLQGKFHFHTVTIQIEDYSEDMKDCQACQGPSD) lie on the Lumenal side of the membrane.

It belongs to the cation diffusion facilitator (CDF) transporter (TC 2.A.4) family. SLC30A subfamily. Homodimer. Interacts (via lysosomal targeting motif) with AP3D1; in AP-3-mediated transport to lysosomes. Interacts with TMEM163. In terms of processing, phosphorylated at Ser-296. Phosphorylation at Ser-296 prevents localization to lysosomes. Dephosphorylation of Ser-296 which triggers localization to lysosomes, accumulation of zinc into lysosomes and lysosomal-mediated cell death is induced by TNF-alpha.

It localises to the cytoplasmic vesicle. The protein localises to the secretory vesicle membrane. Its subcellular location is the zymogen granule membrane. It is found in the endosome membrane. The protein resides in the lysosome membrane. It localises to the mitochondrion inner membrane. The protein localises to the cell membrane. The enzyme catalyses Zn(2+)(in) + 2 H(+)(out) = Zn(2+)(out) + 2 H(+)(in). Electroneutral proton-coupled antiporter concentrating zinc ions into a variety of intracellular organelles including endosomes, zymogen granules and mitochondria. Thereby, plays a crucial role in cellular zinc homeostasis to confer upon cells protection against its potential cytotoxicity. Regulates the zinc concentration of milk, through the transport of zinc ions into secretory vesicles of mammary cells. By concentrating zinc ions into lysosomes participates to lysosomal-mediated cell death during early mammary gland involution. In terms of biological role, electroneutral proton-coupled antiporter mediating the efflux of zinc ions through the plasma membrane. This chain is Proton-coupled zinc antiporter SLC30A2, found in Homo sapiens (Human).